Reading from the N-terminus, the 585-residue chain is Arginine--tRNA ligase (585 aa).

A 'HIGH' region motif is present at residues 127-137 (PNTNKPLHVGH).

The protein belongs to the class-I aminoacyl-tRNA synthetase family. As to quaternary structure, monomer.

The protein resides in the cytoplasm. The enzyme catalyses tRNA(Arg) + L-arginine + ATP = L-arginyl-tRNA(Arg) + AMP + diphosphate. The sequence is that of Arginine--tRNA ligase (argS) from Borreliella burgdorferi (strain ATCC 35210 / DSM 4680 / CIP 102532 / B31) (Borrelia burgdorferi).